The chain runs to 303 residues: Recombination-associated protein RdgC (303 aa).

It belongs to the RdgC family.

Its subcellular location is the cytoplasm. The protein localises to the nucleoid. Functionally, may be involved in recombination. The protein is Recombination-associated protein RdgC of Pseudoalteromonas translucida (strain TAC 125).